The primary structure comprises 127 residues: Modulator protein MzrA (127 aa).

Topologically, residues 1–10 (MLKPRITARQ) are cytoplasmic. Residues 11–31 (LIWISAFLLMLTILMMTWSTL) traverse the membrane as a helical segment. The Periplasmic portion of the chain corresponds to 32–127 (RQQESTLAIR…RLRESSHRFG (96 aa)).

It belongs to the MzrA family. As to quaternary structure, interacts with EnvZ.

Its subcellular location is the cell inner membrane. Functionally, modulates the activity of the EnvZ/OmpR two-component regulatory system, probably by directly modulating EnvZ enzymatic activity and increasing stability of phosphorylated OmpR. The polypeptide is Modulator protein MzrA (Salmonella agona (strain SL483)).